The following is a 601-amino-acid chain: Glutathione-regulated potassium-efflux system protein KefB (601 aa).

The next 13 membrane-spanning stretches (helical) occupy residues 4–24 (ADLL…VPLA), 29–49 (IGAV…GLGF), 55–75 (EILH…GLEL), 87–107 (IFGV…GLLM), 111–131 (FLWQ…TAMA), 152–172 (VLLF…LLAG), 177–197 (HFDW…LIGG), 207–227 (FIAA…LVLS), 230–250 (LFMD…GVLL), 262–282 (AIDP…GMSL), 284–304 (LGVL…LVVI), 324–344 (MQFA…FSTA), and 356–376 (ALLL…MKGI). One can recognise an RCK N-terminal domain in the interval 400-519 (KPQVIVVGFG…AGVTQFSRET (120 aa)).

Belongs to the monovalent cation:proton antiporter 2 (CPA2) transporter (TC 2.A.37) family. KefB subfamily. As to quaternary structure, interacts with the regulatory subunit KefG.

The protein localises to the cell inner membrane. Its function is as follows. Pore-forming subunit of a potassium efflux system that confers protection against electrophiles. Catalyzes K(+)/H(+) antiport. In Salmonella dublin (strain CT_02021853), this protein is Glutathione-regulated potassium-efflux system protein KefB.